A 355-amino-acid chain; its full sequence is Holliday junction branch migration complex subunit RuvB (355 aa).

The tract at residues 1–43 is disordered; the sequence is MEEMDDFTVRRGEREDITGAAGPPEERPLDPAAFEEDDEPTLR. Residues 4-203 are large ATPase domain (RuvB-L); sequence MDDFTVRRGE…FGFSARLDYY (200 aa). Positions 7–17 are enriched in basic and acidic residues; the sequence is FTVRRGEREDI. Residues Leu42, Arg43, Gly84, Lys87, Thr88, Ser89, 150-152, Arg193, Tyr203, and Arg240 each bind ATP; that span reads EDF. A Mg(2+)-binding site is contributed by Thr88. The interval 204 to 274 is small ATPAse domain (RuvB-S); the sequence is EPHELEKIVV…TANAALEMQG (71 aa). The segment at 277–355 is head domain (RuvB-H); the sequence is HLGLDRTDRE…HLGFPVRDGG (79 aa). Positions 313, 332, and 337 each coordinate DNA.

This sequence belongs to the RuvB family. In terms of assembly, homohexamer. Forms an RuvA(8)-RuvB(12)-Holliday junction (HJ) complex. HJ DNA is sandwiched between 2 RuvA tetramers; dsDNA enters through RuvA and exits via RuvB. An RuvB hexamer assembles on each DNA strand where it exits the tetramer. Each RuvB hexamer is contacted by two RuvA subunits (via domain III) on 2 adjacent RuvB subunits; this complex drives branch migration. In the full resolvosome a probable DNA-RuvA(4)-RuvB(12)-RuvC(2) complex forms which resolves the HJ.

It is found in the cytoplasm. The catalysed reaction is ATP + H2O = ADP + phosphate + H(+). The RuvA-RuvB-RuvC complex processes Holliday junction (HJ) DNA during genetic recombination and DNA repair, while the RuvA-RuvB complex plays an important role in the rescue of blocked DNA replication forks via replication fork reversal (RFR). RuvA specifically binds to HJ cruciform DNA, conferring on it an open structure. The RuvB hexamer acts as an ATP-dependent pump, pulling dsDNA into and through the RuvAB complex. RuvB forms 2 homohexamers on either side of HJ DNA bound by 1 or 2 RuvA tetramers; 4 subunits per hexamer contact DNA at a time. Coordinated motions by a converter formed by DNA-disengaged RuvB subunits stimulates ATP hydrolysis and nucleotide exchange. Immobilization of the converter enables RuvB to convert the ATP-contained energy into a lever motion, pulling 2 nucleotides of DNA out of the RuvA tetramer per ATP hydrolyzed, thus driving DNA branch migration. The RuvB motors rotate together with the DNA substrate, which together with the progressing nucleotide cycle form the mechanistic basis for DNA recombination by continuous HJ branch migration. Branch migration allows RuvC to scan DNA until it finds its consensus sequence, where it cleaves and resolves cruciform DNA. This Rubrobacter xylanophilus (strain DSM 9941 / JCM 11954 / NBRC 16129 / PRD-1) protein is Holliday junction branch migration complex subunit RuvB.